The sequence spans 209 residues: Hydrogenase expression/formation protein HupM (209 aa).

Residues glutamate 21, aspartate 67, and histidine 98 each contribute to the Ni(2+) site.

Belongs to the peptidase A31 family.

In terms of biological role, not known. Could be involved in the processing of hydrogenase. The sequence is that of Hydrogenase expression/formation protein HupM (hupM) from Azotobacter chroococcum mcd 1.